We begin with the raw amino-acid sequence, 468 residues long: Glutamate--tRNA ligase (468 aa).

A 'HIGH' region motif is present at residues 9 to 19; that stretch reads PSPTGSIHIGN. The 'KMSKS' region motif lies at 239–243; it reads KLSKR. K242 provides a ligand contact to ATP.

It belongs to the class-I aminoacyl-tRNA synthetase family. Glutamate--tRNA ligase type 1 subfamily. In terms of assembly, monomer.

It is found in the cytoplasm. It catalyses the reaction tRNA(Glu) + L-glutamate + ATP = L-glutamyl-tRNA(Glu) + AMP + diphosphate. Catalyzes the attachment of glutamate to tRNA(Glu) in a two-step reaction: glutamate is first activated by ATP to form Glu-AMP and then transferred to the acceptor end of tRNA(Glu). In Blochmanniella pennsylvanica (strain BPEN), this protein is Glutamate--tRNA ligase.